The sequence spans 261 residues: Cytochrome c oxidase subunit 3 (261 aa).

Over 2-15 the chain is Mitochondrial matrix; it reads THQTHAYHMVNPSP. A helical membrane pass occupies residues 16-34; the sequence is WPLTGALSALLLTSGLVMW. Residues 35–40 lie on the Mitochondrial intermembrane side of the membrane; it reads FHYNST. Residues 41–66 traverse the membrane as a helical segment; the sequence is ILLSLGLLTNILTMYQWWRDIIREGT. At 67–72 the chain is on the mitochondrial matrix side; it reads YQGHHT. A helical membrane pass occupies residues 73–105; the sequence is PIVQKGLRYGMILFIVSEVFFFAGFFWAFYHSS. Residues 106–128 lie on the Mitochondrial intermembrane side of the membrane; it reads LVPTHDLGGCWPPTGITPLNPLE. Residues 129-152 form a helical membrane-spanning segment; the sequence is VPLLNTSVLLASGVSITWAHHSLM. Residues 153–155 lie on the Mitochondrial matrix side of the membrane; the sequence is EGN. Residues 156-183 form a helical membrane-spanning segment; the sequence is RNHMNQALLITILLGLYFTILQASEYFE. At 184 to 190 the chain is on the mitochondrial intermembrane side; the sequence is TSFSISD. A helical membrane pass occupies residues 191 to 223; the sequence is GIYGSTFFMATGFHGLHVIIGSTFLIVCLLRQL. The Mitochondrial matrix segment spans residues 224–232; it reads KFHFTSKHH. A helical transmembrane segment spans residues 233–256; it reads FGFEAAAWYWHFVDVVWLFLYVSI. Over 257 to 261 the chain is Mitochondrial intermembrane; it reads YWWGS.

The protein belongs to the cytochrome c oxidase subunit 3 family. As to quaternary structure, component of the cytochrome c oxidase (complex IV, CIV), a multisubunit enzyme composed of 14 subunits. The complex is composed of a catalytic core of 3 subunits MT-CO1, MT-CO2 and MT-CO3, encoded in the mitochondrial DNA, and 11 supernumerary subunits COX4I, COX5A, COX5B, COX6A, COX6B, COX6C, COX7A, COX7B, COX7C, COX8 and NDUFA4, which are encoded in the nuclear genome. The complex exists as a monomer or a dimer and forms supercomplexes (SCs) in the inner mitochondrial membrane with NADH-ubiquinone oxidoreductase (complex I, CI) and ubiquinol-cytochrome c oxidoreductase (cytochrome b-c1 complex, complex III, CIII), resulting in different assemblies (supercomplex SCI(1)III(2)IV(1) and megacomplex MCI(2)III(2)IV(2)).

The protein resides in the mitochondrion inner membrane. It catalyses the reaction 4 Fe(II)-[cytochrome c] + O2 + 8 H(+)(in) = 4 Fe(III)-[cytochrome c] + 2 H2O + 4 H(+)(out). Its function is as follows. Component of the cytochrome c oxidase, the last enzyme in the mitochondrial electron transport chain which drives oxidative phosphorylation. The respiratory chain contains 3 multisubunit complexes succinate dehydrogenase (complex II, CII), ubiquinol-cytochrome c oxidoreductase (cytochrome b-c1 complex, complex III, CIII) and cytochrome c oxidase (complex IV, CIV), that cooperate to transfer electrons derived from NADH and succinate to molecular oxygen, creating an electrochemical gradient over the inner membrane that drives transmembrane transport and the ATP synthase. Cytochrome c oxidase is the component of the respiratory chain that catalyzes the reduction of oxygen to water. Electrons originating from reduced cytochrome c in the intermembrane space (IMS) are transferred via the dinuclear copper A center (CU(A)) of subunit 2 and heme A of subunit 1 to the active site in subunit 1, a binuclear center (BNC) formed by heme A3 and copper B (CU(B)). The BNC reduces molecular oxygen to 2 water molecules using 4 electrons from cytochrome c in the IMS and 4 protons from the mitochondrial matrix. The protein is Cytochrome c oxidase subunit 3 of Rattus norvegicus (Rat).